A 187-amino-acid chain; its full sequence is PRA1 family protein G1 (187 aa).

A run of 3 helical transmembrane segments spans residues 84-104 (LFLI…AMWL), 125-145 (VIVF…NSLQ), and 146-166 (CLIL…IIRN).

The protein belongs to the PRA1 family. As to expression, expressed in roots and lateral roots.

It is found in the endosome membrane. Its function is as follows. May be involved in both secretory and endocytic intracellular trafficking in the endosomal/prevacuolar compartments. In Arabidopsis thaliana (Mouse-ear cress), this protein is PRA1 family protein G1 (PRA1G1).